We begin with the raw amino-acid sequence, 100 residues long: Competence protein ComGE (100 aa).

Residues 15 to 35 (VILLEAVVALAIFASIATLLL) traverse the membrane as a helical segment.

In terms of assembly, the transformation pili are flexible filaments, consisting mainly of the major pilin ComGC and smaller amounts of the minor pilins, including at least ComGD, ComGF and ComGG, and perhaps ComGE. Interacts with ComGD. Interacts with ComGF. Interacts with ComGG.

It is found in the cell membrane. The protein localises to the cell surface. Functionally, required for formation of the type IV-like pilus (T4P) that plays a role in transformation. Transformation pili are dynamically extended and retracted, perhaps thereby promoting DNA uptake and transformation. Involved in transformation. Required for DNA binding. This Streptococcus pneumoniae (strain ATCC BAA-255 / R6) protein is Competence protein ComGE.